A 74-amino-acid chain; its full sequence is Control protein C.MunI (74 aa).

An HTH cro/C1-type domain is found at 12 to 67 (LKKLRKEKTDLSQESFAAQIDLDRTYYSSIENGKRNVSLVNLEKISAGLGITLSEL). The H-T-H motif DNA-binding region spans 23 to 42 (SQESFAAQIDLDRTYYSSIE).

Functionally, probably controls expression of its associated restriction-modification system MunI. The sequence is that of Control protein C.MunI from Mycoplasma sp.